Consider the following 195-residue polypeptide: Large ribosomal subunit protein uL5 (195 aa).

The disordered stretch occupies residues 1–25; that stretch reads MARVPPPALKKDKKEKKPPKDNSKN.

This sequence belongs to the universal ribosomal protein uL5 family. In terms of assembly, component of the large ribosomal subunit.

It is found in the nucleus. Its subcellular location is the cytoplasm. Component of the ribosome, a large ribonucleoprotein complex responsible for the synthesis of proteins in the cell. The small ribosomal subunit (SSU) binds messenger RNAs (mRNAs) and translates the encoded message by selecting cognate aminoacyl-transfer RNA (tRNA) molecules. The large subunit (LSU) contains the ribosomal catalytic site termed the peptidyl transferase center (PTC), which catalyzes the formation of peptide bonds, thereby polymerizing the amino acids delivered by tRNAs into a polypeptide chain. The nascent polypeptides leave the ribosome through a tunnel in the LSU and interact with protein factors that function in enzymatic processing, targeting, and the membrane insertion of nascent chains at the exit of the ribosomal tunnel. This is Large ribosomal subunit protein uL5 (RpL11) from Spodoptera frugiperda (Fall armyworm).